The sequence spans 402 residues: N-acetyllactosaminide beta-1,6-N-acetylglucosaminyl-transferase (402 aa).

Over 1-7 (MMGSWKH) the chain is Cytoplasmic. The chain crosses the membrane as a helical; Signal-anchor for type II membrane protein span at residues 8–23 (CLFSASLISALIFVFV). Topologically, residues 24–400 (YNTELWENKR…QSETAIQPSW (377 aa)) are lumenal. N-linked (GlcNAc...) asparagine glycosylation is present at Asn-41.

Belongs to the glycosyltransferase 14 family. Expressed in lens epithelium cells. As to expression, expressed in reticulocytes.

It localises to the golgi apparatus membrane. It carries out the reaction a beta-D-Gal-(1-&gt;4)-beta-D-GlcNAc-(1-&gt;3)-beta-D-Gal-(1-&gt;4)-beta-D-GlcNAc derivative + UDP-N-acetyl-alpha-D-glucosamine = a beta-D-Gal-(1-&gt;4)-beta-D-GlcNAc-(1-&gt;3)-[beta-D-GlcNAc-(1-&gt;6)]-beta-D-Gal-(1-&gt;4)-N-acetyl-beta-D-glucosaminyl derivative + UDP + H(+). It functions in the pathway protein modification; protein glycosylation. Branching enzyme that converts linear into branched poly-N-acetyllactosaminoglycans. Introduces the blood group I antigen during embryonic development. It is closely associated with the development and maturation of erythroid cells. Its function is as follows. Determines the expression of the blood group I antigen in erythrocytes. The polypeptide is N-acetyllactosaminide beta-1,6-N-acetylglucosaminyl-transferase (GCNT2) (Homo sapiens (Human)).